Reading from the N-terminus, the 178-residue chain is Peptide deformylase (178 aa).

Fe cation contacts are provided by Cys102 and His144. Glu145 is an active-site residue. A Fe cation-binding site is contributed by His148.

It belongs to the polypeptide deformylase family. Requires Fe(2+) as cofactor.

It catalyses the reaction N-terminal N-formyl-L-methionyl-[peptide] + H2O = N-terminal L-methionyl-[peptide] + formate. Its function is as follows. Removes the formyl group from the N-terminal Met of newly synthesized proteins. Requires at least a dipeptide for an efficient rate of reaction. N-terminal L-methionine is a prerequisite for activity but the enzyme has broad specificity at other positions. In Leptospira borgpetersenii serovar Hardjo-bovis (strain JB197), this protein is Peptide deformylase.